The following is a 399-amino-acid chain: S-adenosylmethionine synthase (399 aa).

Residue histidine 17 participates in ATP binding. Residue aspartate 19 participates in Mg(2+) binding. Glutamate 45 is a binding site for K(+). L-methionine is bound by residues glutamate 58 and glutamine 101. The segment at 101-111 (QSADIAMGVDQ) is flexible loop. ATP contacts are provided by residues 177–179 (DGK), 244–245 (RF), aspartate 253, 259–260 (RK), alanine 276, and lysine 280. Residue aspartate 253 coordinates L-methionine. Lysine 284 lines the L-methionine pocket.

Belongs to the AdoMet synthase family. As to quaternary structure, homotetramer; dimer of dimers. It depends on Mg(2+) as a cofactor. K(+) is required as a cofactor.

The protein resides in the cytoplasm. It catalyses the reaction L-methionine + ATP + H2O = S-adenosyl-L-methionine + phosphate + diphosphate. It functions in the pathway amino-acid biosynthesis; S-adenosyl-L-methionine biosynthesis; S-adenosyl-L-methionine from L-methionine: step 1/1. Catalyzes the formation of S-adenosylmethionine (AdoMet) from methionine and ATP. The overall synthetic reaction is composed of two sequential steps, AdoMet formation and the subsequent tripolyphosphate hydrolysis which occurs prior to release of AdoMet from the enzyme. The chain is S-adenosylmethionine synthase from Bacillus cereus (strain B4264).